Here is a 746-residue protein sequence, read N- to C-terminus: NAD(P)H-quinone oxidoreductase subunit 5, chloroplastic (746 aa).

The next 16 membrane-spanning stretches (helical) occupy residues 9–29 (WIIPFIPLPVPILLGVGLLLF), 40–60 (WTFLSIFLLSIVMIFSLYLSI), 89–109 (IDPLTSIMSILITTVGILVLI), 125–145 (FAYMGFFNTSMLGLVTSSNLI), 147–167 (VYFFWELVGMCSYLLIGFWFT), 185–205 (GDFGLLLGILGLYWITGSFEF), 221–241 (VNLLFLTLCAFLLFVGPIAKS), 258–278 (TPISALIHAATMVAAGIFLVA), 280–300 (LLPLFIVIPSIMYIISLIGII), 327–347 (LGYMMLALGMGSYRSALFHLI), 354–374 (ALLFLGSGSIIHSMEAIVGYS), 396–416 (TAFLVGTLSLCGIPPLACFWS), 425–445 (LLFSPIFAIIACSTAGLTAFY), 547–567 (ILFPMLVLLLFTLFIGAIGIP), 608–628 (FSVSIAVFGIFIAYCLYKPFY), and 723–743 (YLFLYLSYVLIFLMILFFFYF).

This sequence belongs to the complex I subunit 5 family. NDH is composed of at least 16 different subunits, 5 of which are encoded in the nucleus.

It is found in the plastid. It localises to the chloroplast thylakoid membrane. The enzyme catalyses a plastoquinone + NADH + (n+1) H(+)(in) = a plastoquinol + NAD(+) + n H(+)(out). It catalyses the reaction a plastoquinone + NADPH + (n+1) H(+)(in) = a plastoquinol + NADP(+) + n H(+)(out). NDH shuttles electrons from NAD(P)H:plastoquinone, via FMN and iron-sulfur (Fe-S) centers, to quinones in the photosynthetic chain and possibly in a chloroplast respiratory chain. The immediate electron acceptor for the enzyme in this species is believed to be plastoquinone. Couples the redox reaction to proton translocation, and thus conserves the redox energy in a proton gradient. The chain is NAD(P)H-quinone oxidoreductase subunit 5, chloroplastic (ndhF) from Crucihimalaya wallichii (Rock-cress).